Consider the following 170-residue polypeptide: MORN repeat-containing protein 5 (170 aa).

3 MORN repeats span residues 8–30 (YFGE…TDTR), 31–53 (YIGE…SGSR), and 54–75 (FDAI…DGLQ).

In terms of tissue distribution, only detected in testis (at protein level).

It is found in the cell projection. It localises to the cilium. Its subcellular location is the flagellum. In Mus musculus (Mouse), this protein is MORN repeat-containing protein 5 (Morn5).